A 61-amino-acid polypeptide reads, in one-letter code: [Val1,Thr6]-bradykinyl-Gln,Ser (61 aa).

The signal sequence occupies residues 1 to 22 (MSILKKSLFLVLFLGLVSFSIC). Residues 23–50 (EEEKREAEEEENEDEIEEQSEEKKRFEP) constitute a propeptide that is removed on maturation. Residues 25–61 (EKREAEEEENEDEIEEQSEEKKRFEPVPPGFTPFRQS) are disordered. Over residues 30-42 (EEEENEDEIEEQS) the composition is skewed to acidic residues. P52 carries the post-translational modification 4-hydroxyproline; in form [Val1,Hyp2,Thr6]-Bradykinyl-Gln,Ser and [Val1,Hyp2,Thr6]-Bradykinin.

This sequence belongs to the frog skin active peptide (FSAP) family. Bradykinin-related peptide subfamily. In terms of tissue distribution, expressed by the skin glands.

It is found in the secreted. Induces contraction of rat ileum smooth muscle (EC(50)=2.73 uM) but has no activity towards smooth muscle from tail artery, urinary bladder or uterus up to concentrations of 100 uM. Binds to both bradykinin receptor B1 (BDKRB1) and B2 (BDKRB2); the effect via BDKRB1 is stronger. In terms of biological role, [Val1,Hyp2,Thr6]-bradykinin-Gln,Ser: Induces contraction of rat ileum smooth muscle (EC(50)=710 nM) but has no activity towards smooth muscle from tail artery, urinary bladder or uterus up to concentrations of 100 uM. Binds to both bradykinin receptor B1 (BDKRB1) and B2 (BDKRB2); the effect via BDKRB1 is stronger. Induces contraction of guinea pig ileum smooth muscle. This chain is [Val1,Thr6]-bradykinyl-Gln,Ser, found in Pithecopus hypochondrialis (Orange-legged leaf frog).